We begin with the raw amino-acid sequence, 383 residues long: MKNITLLGATGSIGKSTLSVVDLHSDKFNIFTLSANTNWQLMLELCNKYQPNYAIMVDESSAEKLSTIITTDTQILSGTQALDKVVAHQDTDFVMAAIVGTAGMSSALCAVKAGKRIMLANKESLILAGDIFMKAVEEFNAELIPVDSEHSAIFQCLQSGRSGLNKIQLTASGGPFLHTPISKFKYITPNQACAHPNWSMGRKISVDSATMMNKGLEVIEAYYLFSLTPEQIDVVVHPQSIVHSSVYYKDGSTLSQLGKPDMRTVISYAMSYPQRINSGVTALDLTNTPALEFYQPDFEKFTCLKLAFETLNKGGNAMITMNAANEIAVEYFLNHQINFLDIPKIIDQTLSAMKHTTPNSLEEVVNNDLVAREMTREIIKQYG.

T10, G11, S12, I13, N38, and N121 together coordinate NADPH. Position 122 (K122) interacts with 1-deoxy-D-xylulose 5-phosphate. E123 is a binding site for NADPH. Residue D147 participates in Mn(2+) binding. Positions 148, 149, 172, and 195 each coordinate 1-deoxy-D-xylulose 5-phosphate. E149 lines the Mn(2+) pocket. G201 is a binding site for NADPH. The 1-deoxy-D-xylulose 5-phosphate site is built by S208, N213, K214, and E217. Mn(2+) is bound at residue E217.

It belongs to the DXR family. Mg(2+) serves as cofactor. It depends on Mn(2+) as a cofactor.

The catalysed reaction is 2-C-methyl-D-erythritol 4-phosphate + NADP(+) = 1-deoxy-D-xylulose 5-phosphate + NADPH + H(+). It functions in the pathway isoprenoid biosynthesis; isopentenyl diphosphate biosynthesis via DXP pathway; isopentenyl diphosphate from 1-deoxy-D-xylulose 5-phosphate: step 1/6. Its function is as follows. Catalyzes the NADPH-dependent rearrangement and reduction of 1-deoxy-D-xylulose-5-phosphate (DXP) to 2-C-methyl-D-erythritol 4-phosphate (MEP). This Ruthia magnifica subsp. Calyptogena magnifica protein is 1-deoxy-D-xylulose 5-phosphate reductoisomerase.